We begin with the raw amino-acid sequence, 978 residues long: Copper-transporting ATPase HMA4 (978 aa).

Positions 1-11 (MEQNGENHLKD) are enriched in basic and acidic residues. A disordered region spans residues 1-35 (MEQNGENHLKDPLLQADGGGSGASPAGASPRKERK). HMA domains follow at residues 37–103 (RKVM…FEVD), 111–177 (AVCR…FGAD), and 186–252 (NKVH…QPPK). 4 residues coordinate Cu(+): Cys48, Cys51, Cys122, and Cys125. The next 8 membrane-spanning stretches (helical) occupy residues 280 to 300 (FLWSCLFSVPVFMFSMVLPMI), 315 to 335 (MTIGMLLRWLLCSPVQFIIGW), 352 to 372 (MDVLVALGTNAAYFYSVYIVL), 385 to 405 (FFETSAMLISFILLGKYLEVV), 545 to 565 (FFVPTVVVAAFLTWLGWFVAG), 584 to 604 (LALQFGISVLVVACPCALGLA), 907 to 927 (VWALGYNVLGMPVAAGVLFPF), and 935 to 955 (WLAGACMAASSVSVVCSSLLL).

This sequence belongs to the cation transport ATPase (P-type) (TC 3.A.3) family. Type IB subfamily. As to expression, highly expressed in roots. Expressed in vascular tissues of the stele, mainly in pericycle cells.

Its subcellular location is the vacuole membrane. It catalyses the reaction Cu(+)(in) + ATP + H2O = Cu(+)(out) + ADP + phosphate + H(+). Its function is as follows. Copper (Cu) transporter that mediates Cu transport in root vacuoles. Involved in Cu detoxification by sequestrating Cu into root vacuoles and limiting translocation of Cu from the roots to the shoots, and accumulation in grains. The polypeptide is Copper-transporting ATPase HMA4 (Oryza sativa subsp. japonica (Rice)).